A 170-amino-acid polypeptide reads, in one-letter code: RNA polymerase sigma factor TcsR (170 aa).

Positions Ile-122–Lys-169 are sigma-70 factor domain-4. The H-T-H motif DNA-binding region spans Glu-143–Leu-162.

It belongs to the sigma-70 factor family.

Sigma factors are initiation factors that promote the attachment of RNA polymerase to specific initiation sites and are then released. Transcriptional regulator specifically required to activate expression of the toxin gene locus, composed of tcsL and tcdE/utxA. The protein is RNA polymerase sigma factor TcsR of Paraclostridium sordellii (strain ATCC 9714 / DSM 2141 / JCM 3814 / LMG 15708 / NCIMB 10717 / 211) (Clostridium sordellii).